The primary structure comprises 85 residues: XSSLPAASVSLPADSEGGEEEDLQCVCLKTTSGIHPRHISSLEVIGAGLHCPSPQLIATLKTGRKICLDQQNPLYKKIIKRLLKN.

Intrachain disulfides connect C25–C51 and C27–C67. The residue at position 41 (S41) is a Phosphoserine. 76–82 (KKIIKRL) contacts heparin.

Belongs to the intercrine alpha (chemokine CxC) family. Homotetramer. Interacts with TNFAIP6 (via Link domain). Interacts with CCR1. Interacts with CXCR3. Interacts with THBD; this interaction enhances generation of activated protein C.

It is found in the secreted. Chemokine released during platelet aggregation that plays a role in different biological processes including hematopoiesis, cell proliferation, differentiation, and activation. Acts via different functional receptors including CCR1, CXCR3A or CXCR3B. Upon interaction with CXCR3A receptor, induces activated T-lymphocytes migration mediated via downstream Ras/extracellular signal-regulated kinase (ERK) signaling. Neutralizes the anticoagulant effect of heparin by binding more strongly to heparin than to the chondroitin-4-sulfate chains of the carrier molecule. Plays a role in the inhibition of hematopoiesis and in the maintenance of hematopoietic stem cell (HSC) quiescence. Chemotactic for neutrophils and monocytes via CCR1. Inhibits endothelial cell proliferation. In cooperation with toll-like receptor 8/TLR8, induces chromatin remodeling and activates inflammatory gene expression via the TBK1-IRF5 axis. In addition, induces myofibroblast differentiation and collagen synthesis in different precursor cells, including endothelial cells, by stimulating endothelial-to-mesenchymal transition. Interacts with thrombomodulin/THBD to enhance the activation of protein C and thus potentiates its anticoagulant activity. In Ovis aries (Sheep), this protein is Platelet factor 4 (PF4).